The following is a 410-amino-acid chain: Schlafen-like protein 1 (410 aa).

2 disordered regions span residues 1–20 and 141–199; these read MSLR…VMSQ and LHHR…SGVR. Polar residues predominate over residues 8–20; sequence AQTQMWESPVMSQ. A compositionally biased stretch (pro residues) spans 154–173; that stretch reads SHSPGPSPGPSPGLRHPPLP. An ATP-binding site is contributed by 264–271; the sequence is GVEDSGLV. Positions 370-401 form a coiled coil; the sequence is QKWAMELGKLEEKVKVLTLEKEQLQQQLRQRQ.

Belongs to the Schlafen family. Subgroup I subfamily.

This chain is Schlafen-like protein 1 (Slfnl1), found in Mus musculus (Mouse).